The sequence spans 131 residues: Small ribosomal subunit protein uS8 (131 aa).

The protein belongs to the universal ribosomal protein uS8 family. In terms of assembly, part of the 30S ribosomal subunit. Contacts proteins S5 and S12.

Its function is as follows. One of the primary rRNA binding proteins, it binds directly to 16S rRNA central domain where it helps coordinate assembly of the platform of the 30S subunit. The polypeptide is Small ribosomal subunit protein uS8 (Ruminiclostridium cellulolyticum (strain ATCC 35319 / DSM 5812 / JCM 6584 / H10) (Clostridium cellulolyticum)).